The following is a 201-amino-acid chain: Small ribosomal subunit protein uS4 (201 aa).

The segment at 26 to 45 is disordered; that stretch reads FEKRNYPPGQHGNNRRRGKK. The S4 RNA-binding domain maps to 93–153; it reads SRLDNVVYRM…EKSKSLAVVQ (61 aa).

This sequence belongs to the universal ribosomal protein uS4 family. In terms of assembly, part of the 30S ribosomal subunit. Contacts protein S5. The interaction surface between S4 and S5 is involved in control of translational fidelity.

In terms of biological role, one of the primary rRNA binding proteins, it binds directly to 16S rRNA where it nucleates assembly of the body of the 30S subunit. With S5 and S12 plays an important role in translational accuracy. This chain is Small ribosomal subunit protein uS4, found in Christiangramia forsetii (strain DSM 17595 / CGMCC 1.15422 / KT0803) (Gramella forsetii).